The sequence spans 545 residues: Chaperonin GroEL (545 aa).

Residues 30–33 (TLGP), Lys-51, 87–91 (DGTTT), Gly-415, 483–485 (NAA), and Asp-499 each bind ATP.

This sequence belongs to the chaperonin (HSP60) family. In terms of assembly, forms a cylinder of 14 subunits composed of two heptameric rings stacked back-to-back. Interacts with the co-chaperonin GroES.

Its subcellular location is the cytoplasm. It catalyses the reaction ATP + H2O + a folded polypeptide = ADP + phosphate + an unfolded polypeptide.. Functionally, together with its co-chaperonin GroES, plays an essential role in assisting protein folding. The GroEL-GroES system forms a nano-cage that allows encapsulation of the non-native substrate proteins and provides a physical environment optimized to promote and accelerate protein folding. The protein is Chaperonin GroEL of Aquifex aeolicus (strain VF5).